The primary structure comprises 534 residues: Cytochrome c oxidase subunit 1 (534 aa).

A helical membrane pass occupies residues 16–36 (VLYFMLAIFSGMAGTAMSLII). Ca(2+)-binding residues include glutamate 39, alanine 42, and glycine 44. The next 6 helical transmembrane spans lie at 57 to 77 (VLVV…ALIG), 101 to 121 (IAFW…LVES), 147 to 167 (AIFA…NFIV), 182 to 202 (LPLF…SLPV), 235 to 255 (LFYF…FGII), and 267 to 287 (VFGE…GFLV). Histidine 62 contributes to the Fe(II)-heme a binding site. Histidine 241 is a binding site for Cu cation. A cross-link (1'-histidyl-3'-tyrosine (His-Tyr)) is located at residues 241-245 (HPEVY). O2 is bound at residue tyrosine 245. Residues histidine 290 and histidine 291 each coordinate Cu cation. 2 consecutive transmembrane segments (helical) span residues 310 to 330 (MIIA…IYGG) and 338 to 358 (MLYA…GVAL). Mg(2+)-binding residues include histidine 368 and aspartate 369. 2 consecutive transmembrane segments (helical) span residues 372-392 (YVVG…LFAG) and 414-434 (FWLI…LGIN). Histidine 376 provides a ligand contact to heme a3. Histidine 378 serves as a coordination point for Fe(II)-heme a. Residue proline 441 participates in Ca(2+) binding. Residues 452-472 (YVASIGSFIATLSLFLFIYIL) traverse the membrane as a helical segment.

This sequence belongs to the heme-copper respiratory oxidase family. Component of the cytochrome c oxidase (complex IV, CIV), a multisubunit enzyme composed of a catalytic core of 3 subunits and several supernumerary subunits. The complex exists as a monomer or a dimer and forms supercomplexes (SCs) in the inner mitochondrial membrane with ubiquinol-cytochrome c oxidoreductase (cytochrome b-c1 complex, complex III, CIII). Heme is required as a cofactor. Requires Cu cation as cofactor.

The protein resides in the mitochondrion inner membrane. It catalyses the reaction 4 Fe(II)-[cytochrome c] + O2 + 8 H(+)(in) = 4 Fe(III)-[cytochrome c] + 2 H2O + 4 H(+)(out). It participates in energy metabolism; oxidative phosphorylation. Its function is as follows. Component of the cytochrome c oxidase, the last enzyme in the mitochondrial electron transport chain which drives oxidative phosphorylation. The respiratory chain contains 3 multisubunit complexes succinate dehydrogenase (complex II, CII), ubiquinol-cytochrome c oxidoreductase (cytochrome b-c1 complex, complex III, CIII) and cytochrome c oxidase (complex IV, CIV), that cooperate to transfer electrons derived from NADH and succinate to molecular oxygen, creating an electrochemical gradient over the inner membrane that drives transmembrane transport and the ATP synthase. Cytochrome c oxidase is the component of the respiratory chain that catalyzes the reduction of oxygen to water. Electrons originating from reduced cytochrome c in the intermembrane space (IMS) are transferred via the dinuclear copper A center (CU(A)) of subunit 2 and heme A of subunit 1 to the active site in subunit 1, a binuclear center (BNC) formed by heme A3 and copper B (CU(B)). The BNC reduces molecular oxygen to 2 water molecules using 4 electrons from cytochrome c in the IMS and 4 protons from the mitochondrial matrix. The protein is Cytochrome c oxidase subunit 1 (COXI) of Saccharomyces paradoxus (Yeast).